A 335-amino-acid polypeptide reads, in one-letter code: Phosphate acyltransferase (335 aa).

The protein belongs to the PlsX family. Homodimer. Probably interacts with PlsY.

Its subcellular location is the cytoplasm. It carries out the reaction a fatty acyl-[ACP] + phosphate = an acyl phosphate + holo-[ACP]. It participates in lipid metabolism; phospholipid metabolism. Catalyzes the reversible formation of acyl-phosphate (acyl-PO(4)) from acyl-[acyl-carrier-protein] (acyl-ACP). This enzyme utilizes acyl-ACP as fatty acyl donor, but not acyl-CoA. The chain is Phosphate acyltransferase from Streptococcus pyogenes serotype M18 (strain MGAS8232).